Here is a 219-residue protein sequence, read N- to C-terminus: Large ribosomal subunit protein uL16 (219 aa).

The protein belongs to the universal ribosomal protein uL16 family. Component of the small ribosomal subunit. Mature ribosomes consist of a small (40S) and a large (60S) subunit. The 40S subunit contains about 33 different proteins and 1 molecule of RNA (18S). The 60S subunit contains about 49 different proteins and 3 molecules of RNA (25S, 5.8S and 5S).

This Encephalitozoon cuniculi (strain GB-M1) (Microsporidian parasite) protein is Large ribosomal subunit protein uL16 (RPL10).